A 159-amino-acid polypeptide reads, in one-letter code: Cytochrome b6-f complex subunit 4 (159 aa).

The next 3 membrane-spanning stretches (helical) occupy residues 35 to 55, 93 to 113, and 127 to 147; these read ILIF…LAVL, LLGV…PFIE, and ATAV…GAMI.

It belongs to the cytochrome b family. PetD subfamily. As to quaternary structure, the 4 large subunits of the cytochrome b6-f complex are cytochrome b6, subunit IV (17 kDa polypeptide, PetD), cytochrome f and the Rieske protein, while the 4 small subunits are PetG, PetL, PetM and PetN. The complex functions as a dimer.

Its subcellular location is the cell inner membrane. Component of the cytochrome b6-f complex, which mediates electron transfer between photosystem II (PSII) and photosystem I (PSI), cyclic electron flow around PSI, and state transitions. This is Cytochrome b6-f complex subunit 4 from Gloeobacter violaceus (strain ATCC 29082 / PCC 7421).